The following is a 108-amino-acid chain: Glutaredoxin 4 (108 aa).

The Glutaredoxin domain maps to 4 to 106 (FQKIKKQIQD…KLILKVKKKY (103 aa)). Lysine 21 is a binding site for glutathione. Cysteine 29 is a [2Fe-2S] cluster binding site. Residues arginine 58, phenylalanine 70, and 83-84 (CS) contribute to the glutathione site.

It belongs to the glutaredoxin family. Monothiol subfamily. Homodimer.

The protein resides in the cytoplasm. In terms of biological role, monothiol glutaredoxin involved in the biogenesis of iron-sulfur clusters. This Buchnera aphidicola subsp. Acyrthosiphon pisum (strain APS) (Acyrthosiphon pisum symbiotic bacterium) protein is Glutaredoxin 4 (grxD).